The primary structure comprises 615 residues: NEDD8 ultimate buster 1 (615 aa).

Coiled-coil stretches lie at residues L36–R70 and K152–T203. 3 UBA domains span residues Y374–N413, E424–N470, and S489–N529. A Nuclear localization signal motif is present at residues R414–R431. Residues E427–W474 are NEDD8-binding 1. A disordered region spans residues S532 to Y586. Residues L539–S562 show a composition bias toward low complexity. An NEDD8-binding 2 region spans residues T550–I598. Residues T563 to Y586 are compositionally biased toward acidic residues.

Directly interacts with NEDD8 and PSMD4/S5a, a member of the regulatory subunit of the 26S proteasome. Isoform 1 binds to NEDD8 more efficiently than isoform 2. Interacts with AIPL1. The interaction with UBD via UBA domains facilitates the linking of UBD-conjugated target protein to the proteasome complex and accelerates UBD degradation and that of its conjugates. Widely expressed with lowest expression in the pancreas for isoform 1 and in leukocytes, liver, prostate and skeletal muscle for isoform 2.

It is found in the nucleus. In terms of biological role, specific down-regulator of the NEDD8 conjugation system. Recruits NEDD8, UBD, and their conjugates to the proteasome for degradation. Isoform 1 promotes the degradation of NEDD8 more efficiently than isoform 2. The sequence is that of NEDD8 ultimate buster 1 (NUB1) from Homo sapiens (Human).